Here is a 598-residue protein sequence, read N- to C-terminus: Aspartate--tRNA(Asp/Asn) ligase (598 aa).

An L-aspartate-binding site is contributed by E177. The aspartate stretch occupies residues 201–204 (QIFK). Residues R223 and H451 each coordinate L-aspartate. 223 to 225 (RDE) serves as a coordination point for ATP. An ATP-binding site is contributed by E485. Residue R492 coordinates L-aspartate. 537 to 540 (GVDR) is a binding site for ATP.

It belongs to the class-II aminoacyl-tRNA synthetase family. Type 1 subfamily. In terms of assembly, homodimer.

It localises to the cytoplasm. It catalyses the reaction tRNA(Asx) + L-aspartate + ATP = L-aspartyl-tRNA(Asx) + AMP + diphosphate. Functionally, aspartyl-tRNA synthetase with relaxed tRNA specificity since it is able to aspartylate not only its cognate tRNA(Asp) but also tRNA(Asn). Reaction proceeds in two steps: L-aspartate is first activated by ATP to form Asp-AMP and then transferred to the acceptor end of tRNA(Asp/Asn). The sequence is that of Aspartate--tRNA(Asp/Asn) ligase from Anaplasma phagocytophilum (strain HZ).